A 113-amino-acid polypeptide reads, in one-letter code: Prostate and testis expressed protein 2 (113 aa).

An N-terminal signal peptide occupies residues 1-26; sequence MLVLFLLGTVFLLCPYWGELHDPIKA. Residues 29 to 110 enclose the UPAR/Ly6 domain; that stretch reads IMCYECKKYH…CDHSNYCNLP (82 aa). Intrachain disulfides connect Cys31/Cys57, Cys34/Cys42, Cys49/Cys80, and Cys84/Cys101.

This sequence belongs to the PATE family. In terms of tissue distribution, isoform 1 and isoform 2 are expressed in prostate and testis. Isoform 2 is expressed in male and female brain at equivalent levels, in particular in cerebellum, cerebral cortex, corpus callosum, occipital, parrietal and temporal lobes, and pons, but not in amygdala, cerebral peduncle, hippocampus and thalamus.

It is found in the secreted. This Homo sapiens (Human) protein is Prostate and testis expressed protein 2 (PATE2).